The following is a 1110-amino-acid chain: Isoleucine--tRNA ligase (1110 aa).

Positions 47–57 match the 'HIGH' region motif; it reads PSANGTPGIHH. Residues 658-662 carry the 'KMSKS' region motif; the sequence is KMSKR. Lys661 serves as a coordination point for ATP.

The protein belongs to the class-I aminoacyl-tRNA synthetase family. IleS type 2 subfamily. In terms of assembly, monomer. The cofactor is Zn(2+).

The protein localises to the cytoplasm. The catalysed reaction is tRNA(Ile) + L-isoleucine + ATP = L-isoleucyl-tRNA(Ile) + AMP + diphosphate. Its function is as follows. Catalyzes the attachment of isoleucine to tRNA(Ile). As IleRS can inadvertently accommodate and process structurally similar amino acids such as valine, to avoid such errors it has two additional distinct tRNA(Ile)-dependent editing activities. One activity is designated as 'pretransfer' editing and involves the hydrolysis of activated Val-AMP. The other activity is designated 'posttransfer' editing and involves deacylation of mischarged Val-tRNA(Ile). The sequence is that of Isoleucine--tRNA ligase from Cytophaga hutchinsonii (strain ATCC 33406 / DSM 1761 / CIP 103989 / NBRC 15051 / NCIMB 9469 / D465).